Consider the following 448-residue polypeptide: UDP-N-acetylmuramoylalanine--D-glutamate ligase (448 aa).

Residue G116–T122 participates in ATP binding.

The protein belongs to the MurCDEF family.

Its subcellular location is the cytoplasm. It carries out the reaction UDP-N-acetyl-alpha-D-muramoyl-L-alanine + D-glutamate + ATP = UDP-N-acetyl-alpha-D-muramoyl-L-alanyl-D-glutamate + ADP + phosphate + H(+). Its pathway is cell wall biogenesis; peptidoglycan biosynthesis. Functionally, cell wall formation. Catalyzes the addition of glutamate to the nucleotide precursor UDP-N-acetylmuramoyl-L-alanine (UMA). This chain is UDP-N-acetylmuramoylalanine--D-glutamate ligase, found in Pseudomonas syringae pv. tomato (strain ATCC BAA-871 / DC3000).